The chain runs to 145 residues: uncharacterized protein (145 aa).

The residue at position 67 (Ser-67) is a Phosphoserine.

Expressed in retina and retinoblastoma.

This is an uncharacterized protein from Homo sapiens (Human).